Consider the following 448-residue polypeptide: Dual specificity mitogen-activated protein kinase kinase 5 (448 aa).

Residues 18–25 (VIRIKIPN) form an interaction with MAPK7 region. Residues 18-109 (VIRIKIPNSG…EPLQIFPRAC (92 aa)) enclose the PB1 domain. An interaction with MAP3K2/MAP3K3 region spans residues 64–68 (DEDGD). The segment at 116-144 (NIHGLKVNTRAGPSQHSSPAVSDSLPSNS) is disordered. An interaction with MAPK7 region spans residues 117–131 (IHGLKVNTRAGPSQH). Residues 126–144 (AGPSQHSSPAVSDSLPSNS) are compositionally biased toward polar residues. The region spanning 166-409 (IRYRDTLGHG…MRKQPKERPA (244 aa)) is the Protein kinase domain. ATP contacts are provided by residues 172–180 (LGHGNGGTV) and Lys-195. Asp-283 acts as the Proton acceptor in catalysis. Ser-311 is subject to Phosphoserine. A Phosphothreonine modification is found at Thr-315.

Belongs to the protein kinase superfamily. STE Ser/Thr protein kinase family. MAP kinase kinase subfamily. Interacts with PARD6A, MAP3K3 and MAPK7. Forms a complex with SQSTM1 and PRKCZ or PRKCI. In terms of assembly, (Microbial infection) Interacts with Yersinia YopJ. It depends on Mg(2+) as a cofactor. Post-translationally, activated by phosphorylation on Ser/Thr by MAP kinase kinase kinases. (Microbial infection) Yersinia YopJ may acetylate Ser/Thr residues, preventing phosphorylation and activation, thus blocking the MAPK signaling pathway. Expressed in many adult tissues. Abundant in heart and skeletal muscle.

The catalysed reaction is L-seryl-[protein] + ATP = O-phospho-L-seryl-[protein] + ADP + H(+). The enzyme catalyses L-threonyl-[protein] + ATP = O-phospho-L-threonyl-[protein] + ADP + H(+). It carries out the reaction L-tyrosyl-[protein] + ATP = O-phospho-L-tyrosyl-[protein] + ADP + H(+). In terms of biological role, acts as a scaffold for the formation of a ternary MAP3K2/MAP3K3-MAP3K5-MAPK7 signaling complex. Activation of this pathway appears to play a critical role in protecting cells from stress-induced apoptosis, neuronal survival and cardiac development and angiogenesis. As part of the MAPK/ERK signaling pathway, acts as a negative regulator of apoptosis in cardiomyocytes via promotion of STUB1/CHIP-mediated ubiquitination and degradation of ICER-type isoforms of CREM. This chain is Dual specificity mitogen-activated protein kinase kinase 5 (MAP2K5), found in Homo sapiens (Human).